The primary structure comprises 358 residues: 4-hydroxybenzoate polyprenyltransferase, mitochondrial (358 aa).

A mitochondrion-targeting transit peptide spans 1–20 (MIIKPIASPARYFLRTPSWS). Helical transmembrane passes span 76–96 (TGTY…AYAY), 107–127 (LALF…INDL), 154–174 (AISL…QLNP), 202–222 (VVLG…LAGE), 229–249 (VVAP…TIYA), 275–295 (VLCG…IMNG), and 336–356 (NTGY…SFIY).

It belongs to the UbiA prenyltransferase family. It depends on Mg(2+) as a cofactor.

The protein resides in the mitochondrion. It is found in the mitochondrion inner membrane. It catalyses the reaction an all-trans-polyprenyl diphosphate + 4-hydroxybenzoate = a 4-hydroxy-3-(all-trans-polyprenyl)benzoate + diphosphate. It functions in the pathway cofactor biosynthesis; ubiquinone biosynthesis. Functionally, catalyzes the prenylation of para-hydroxybenzoate (PHB) with an all-trans polyprenyl group. Mediates the second step in the final reaction sequence of coenzyme Q (CoQ) biosynthesis, which is the condensation of the polyisoprenoid side chain with PHB, generating the first membrane-bound Q intermediate. The chain is 4-hydroxybenzoate polyprenyltransferase, mitochondrial from Schizosaccharomyces pombe (strain 972 / ATCC 24843) (Fission yeast).